The sequence spans 44 residues: Putative keratin-associated protein 20-4 (44 aa).

It belongs to the KRTAP type 20 family. Interacts with hair keratins.

In the hair cortex, hair keratin intermediate filaments are embedded in an interfilamentous matrix, consisting of hair keratin-associated proteins (KRTAP), which are essential for the formation of a rigid and resistant hair shaft through their extensive disulfide bond cross-linking with abundant cysteine residues of hair keratins. The matrix proteins include the high-sulfur and high-glycine-tyrosine keratins. This Homo sapiens (Human) protein is Putative keratin-associated protein 20-4 (KRTAP20-4).